The chain runs to 233 residues: 7-cyano-7-deazaguanine synthase (233 aa).

An ATP-binding site is contributed by 7-17 (LSGGLDSLVTS). Zn(2+) is bound by residues C195, C206, C209, and C212.

This sequence belongs to the QueC family. The cofactor is Zn(2+).

It catalyses the reaction 7-carboxy-7-deazaguanine + NH4(+) + ATP = 7-cyano-7-deazaguanine + ADP + phosphate + H2O + H(+). The protein operates within purine metabolism; 7-cyano-7-deazaguanine biosynthesis. In terms of biological role, catalyzes the ATP-dependent conversion of 7-carboxy-7-deazaguanine (CDG) to 7-cyano-7-deazaguanine (preQ(0)). This Methanococcus vannielii (strain ATCC 35089 / DSM 1224 / JCM 13029 / OCM 148 / SB) protein is 7-cyano-7-deazaguanine synthase.